A 279-amino-acid polypeptide reads, in one-letter code: MSSSSGSAVNIAIVTLFPEMFAAITESGISRRAVEQGLVKLSFFNPRTYTTDKHQTVDDRPYGGGPGMVMRVEPLAKALLAAKQWHSEQRAEQALPNTAKETVIYMSPQGAQLNNQAVDTMAASGDFTIIAGRYEGVDQRFIDAFVDQEWSIGDYVLSGGELPAMVLIDALIRKLPGALGDAQSAEQDSFENGLLDCPHYTRPEELADAWQTSVDDRRVPAVLLSGDHKKIELWRLKQSLGRTWERRPDLLNKLDLDQSQRNLLTEYQQQKLSCSSSDD.

S-adenosyl-L-methionine-binding positions include Gly132 and 152 to 157 (IGDYVL).

This sequence belongs to the RNA methyltransferase TrmD family. As to quaternary structure, homodimer.

The protein resides in the cytoplasm. It catalyses the reaction guanosine(37) in tRNA + S-adenosyl-L-methionine = N(1)-methylguanosine(37) in tRNA + S-adenosyl-L-homocysteine + H(+). Specifically methylates guanosine-37 in various tRNAs. This Saccharophagus degradans (strain 2-40 / ATCC 43961 / DSM 17024) protein is tRNA (guanine-N(1)-)-methyltransferase.